The primary structure comprises 254 residues: MAYTKIALFAAIAALASAQTQDQINELNVILNDVKSHLQEYISLASDSSSGFSLSSMPAGVLDIGMALASATDDSYTTLYSEVDFAGVSKMLTMVPWYSSRLEPALKSLNGDASSSAAPSSSAAPTSSAAPSSSAAPTSSAASSSSEAKSSSAAPSSSEAKSSSAAPSSSEAKSSSAAPSSSEAKSSSAAPSSTEAKITSAAPSSTGAKTSAISQITDGQIQATKAVSEQTENGAAKAFVGMGAGVVAAAAMLL.

An N-terminal signal peptide occupies residues 1 to 18 (MAYTKIALFAAIAALASA). The disordered stretch occupies residues 110–213 (NGDASSSAAP…SSTGAKTSAI (104 aa)). Positions 113 to 197 (ASSSAAPSSS…SAAPSSTEAK (85 aa)) are enriched in low complexity. 10 consecutive repeat copies span residues 114-119 (SSSAAP), 120-125 (SSSAAP), 126-131 (TSSAAP), 132-137 (SSSAAP), 138-143 (TSSAAS), 144-155 (SSSEAKSSSAAP), 156-167 (SSSEAKSSSAAP), 168-179 (SSSEAKSSSAAP), 180-191 (SSSEAKSSSAAP), and 192-203 (SSTEAKITSAAP). The tract at residues 114–143 (SSSAAPSSSAAPTSSAAPSSSAAPTSSAAS) is 5 X 6 AA approximate tandem repeats, Ala/Ser-rich. The segment at 144–203 (SSSEAKSSSAAPSSSEAKSSSAAPSSSEAKSSSAAPSSSEAKSSSAAPSSTEAKITSAAP) is 5 X 12 AA approximate tandem repeats, Ala/Ser-rich. Residues 201–213 (AAPSSTGAKTSAI) are compositionally biased toward polar residues. Residues 210–224 (TSAISQITDGQIQAT) form a PIR1/2/3 repeat. The GPI-anchor amidated asparagine moiety is linked to residue N233. The propeptide at 234–254 (GAAKAFVGMGAGVVAAAAMLL) is removed in mature form.

Belongs to the SRP1/TIP1 family. In terms of processing, O-glycosylated. The GPI-anchor is attached to the protein in the endoplasmic reticulum and serves to target the protein to the cell surface. There, the glucosamine-inositol phospholipid moiety is cleaved off and the GPI-modified mannoprotein is covalently attached via its lipidless GPI glycan remnant to the 1,6-beta-glucan of the outer cell wall layer. Post-translationally, covalently linked to beta-1,3-glucan of the inner cell wall layer via an alkali-sensitive ester linkage between the gamma-carboxyl group of glutamic acids, arising from a specific glutamine within the PIR1/2/3 repeat, and hydroxyl groups of glucoses of beta-1,3-glucan chains.

Its subcellular location is the secreted. It is found in the cell wall. The protein resides in the membrane. Component of the cell wall. Required for anaerobic growth. This chain is Cold shock-induced protein TIR1 (TIR1), found in Saccharomyces cerevisiae (strain ATCC 204508 / S288c) (Baker's yeast).